A 463-amino-acid polypeptide reads, in one-letter code: Fumarate hydratase class II (463 aa).

Residues 98–100, 129–132, 139–141, and threonine 187 contribute to the substrate site; these read SGT, HPND, and SSN. Residue histidine 188 is the Proton donor/acceptor of the active site. Serine 318 is an active-site residue. Residues serine 319 and 324 to 326 contribute to the substrate site; that span reads KVN.

This sequence belongs to the class-II fumarase/aspartase family. Fumarase subfamily. As to quaternary structure, homotetramer.

It is found in the cytoplasm. It catalyses the reaction (S)-malate = fumarate + H2O. The protein operates within carbohydrate metabolism; tricarboxylic acid cycle; (S)-malate from fumarate: step 1/1. Functionally, involved in the TCA cycle. Catalyzes the stereospecific interconversion of fumarate to L-malate. The polypeptide is Fumarate hydratase class II (Caulobacter vibrioides (strain ATCC 19089 / CIP 103742 / CB 15) (Caulobacter crescentus)).